The chain runs to 83 residues: Mu-theraphotoxin-Hhn2j 4 (83 aa).

The signal sequence occupies residues Met-1 to Ala-21. Positions Ser-22 to Arg-48 are excised as a propeptide. 3 disulfides stabilise this stretch: Cys-50–Cys-65, Cys-57–Cys-70, and Cys-64–Cys-77. Residue Leu-81 is modified to Leucine amide.

This sequence belongs to the neurotoxin 10 (Hwtx-1) family. 15 (Hntx-3) subfamily. As to quaternary structure, monomer. Expressed by the venom gland.

The protein localises to the secreted. In terms of biological role, lethal neurotoxin. Selectively blocks tetrodotoxin-sensitive voltage-gated sodium channels (Nav). Does not affect tetrodotoxin-resistant voltage-gated sodium channels or calcium channels. The sequence is that of Mu-theraphotoxin-Hhn2j 4 from Cyriopagopus hainanus (Chinese bird spider).